A 209-amino-acid chain; its full sequence is APC/C-CDH1 modulator 1 (209 aa).

Residues 1–38 (MISPSKKRTILSSKNINQKPRAVVKGNELRSPSKRRSQ) form a disordered region. The residue at position 48 (serine 48) is a Phosphoserine. The residue at position 161 (threonine 161) is a Phosphothreonine. A Phosphoserine modification is found at serine 202.

As to quaternary structure, interacts with CDH1, BMH1 and BMH2.

Negative regulator of GDH1, the activator protein that regulates the ubiquitin ligase activity and substrate specificity of the anaphase promoting complex/cyclosome (APC/C), and which is required for exit from mitosis, cytokinesis and formation of prereplicative complexes in G1. This chain is APC/C-CDH1 modulator 1 (ACM1), found in Saccharomyces cerevisiae (strain ATCC 204508 / S288c) (Baker's yeast).